Consider the following 315-residue polypeptide: Mycothiol acetyltransferase (315 aa).

N-acetyltransferase domains follow at residues 4–141 and 152–315; these read LDWR…RPLR and VVIR…GTDN. E36 is a 1D-myo-inositol 2-(L-cysteinylamino)-2-deoxy-alpha-D-glucopyranoside binding site. Residues 80–82 and 88–93 contribute to the acetyl-CoA site; these read LVV and RRGIGT. Residues E179, K224, and E234 each coordinate 1D-myo-inositol 2-(L-cysteinylamino)-2-deoxy-alpha-D-glucopyranoside. Acetyl-CoA-binding positions include 238–240 and 245–251; these read LGV and QRRGLGQ. 1D-myo-inositol 2-(L-cysteinylamino)-2-deoxy-alpha-D-glucopyranoside is bound at residue Y282. 287–292 contacts acetyl-CoA; that stretch reads NVAAVR.

It belongs to the acetyltransferase family. MshD subfamily. Monomer.

It catalyses the reaction 1D-myo-inositol 2-(L-cysteinylamino)-2-deoxy-alpha-D-glucopyranoside + acetyl-CoA = mycothiol + CoA + H(+). Functionally, catalyzes the transfer of acetyl from acetyl-CoA to desacetylmycothiol (Cys-GlcN-Ins) to form mycothiol. The protein is Mycothiol acetyltransferase of Mycobacterium bovis (strain ATCC BAA-935 / AF2122/97).